Here is a 106-residue protein sequence, read N- to C-terminus: MMEKIRKGDEIVVITGKDKGKRGTVLRRVDDEHVLVEGVNRAKKHVKPNPVKGVAGGIVDKDMPIHISNVALFNPATKKADRVGFKALDDGRKVRVFKSNGELVNA.

Belongs to the universal ribosomal protein uL24 family. In terms of assembly, part of the 50S ribosomal subunit.

In terms of biological role, one of two assembly initiator proteins, it binds directly to the 5'-end of the 23S rRNA, where it nucleates assembly of the 50S subunit. Functionally, one of the proteins that surrounds the polypeptide exit tunnel on the outside of the subunit. In Dechloromonas aromatica (strain RCB), this protein is Large ribosomal subunit protein uL24.